Reading from the N-terminus, the 407-residue chain is UDP-N-acetyl-D-mannosamine dehydrogenase (407 aa).

It belongs to the UDP-glucose/GDP-mannose dehydrogenase family.

It catalyses the reaction UDP-N-acetyl-alpha-D-mannosamine + 2 NAD(+) + H2O = UDP-N-acetyl-alpha-D-mannosaminouronate + 2 NADH + 3 H(+). The protein operates within capsule biogenesis; capsule polysaccharide biosynthesis. Its function is as follows. Dehydrogenase involved in the biosynthesis of capsular polysaccharides. Catalyzes the NAD(+)-dependent oxidation of UDP-N-acetyl-D-mannosamine (UDP-ManNAc) to UDP-N-acetyl-D-mannosaminuronic acid (UDP-ManNAcA). This chain is UDP-N-acetyl-D-mannosamine dehydrogenase, found in Campylobacter jejuni.